Here is a 1040-residue protein sequence, read N- to C-terminus: Multidrug resistance protein MdtB (1040 aa).

The next 12 membrane-spanning stretches (helical) occupy residues 25–45, 347–367, 369–389, 396–416, 440–460, 472–492, 537–557, 863–883, 888–908, 910–930, 968–988, and 998–1018; these read LLMAAILLAGIIGYRFLPVAA, LMLAIALVVMIIYLFLRNIPA, IIPGVAVPLSLIGTFAVMVFL, LTLMALTIATGFVVDDAIVVI, IGFTIISLTFSLIAVLIPLLF, FAVTLAVAILISAVVSLTLTP, WLTLSVAFATLLLSVMLWIVI, LGSTVWLIVAAVVAMYIVLGV, FIHPITILSTLPTAGVGALLA, IIAGSELDIIAIIGIILLIGI, ILMTTLAALLGALPLMLSTGV, and IAMVGGLLVSQVLTLFTTPVI.

It belongs to the resistance-nodulation-cell division (RND) (TC 2.A.6) family. MdtB subfamily. In terms of assembly, part of a tripartite efflux system composed of MdtA, MdtB and MdtC. MdtB forms a heteromultimer with MdtC.

The protein resides in the cell inner membrane. This chain is Multidrug resistance protein MdtB, found in Salmonella paratyphi B (strain ATCC BAA-1250 / SPB7).